Here is a 332-residue protein sequence, read N- to C-terminus: Malate dehydrogenase, cytoplasmic (332 aa).

NAD(+)-binding positions include Q16–I17, D43, and G90. R99 contacts oxaloacetate. NAD(+)-binding residues include Q113 and N132. Residues N132, R163, H188, and S243 each contribute to the oxaloacetate site. Catalysis depends on H188, which acts as the Proton acceptor.

Belongs to the LDH/MDH superfamily. MDH type 2 family. In terms of assembly, homodimer.

The protein resides in the cytoplasm. The catalysed reaction is (S)-malate + NAD(+) = oxaloacetate + NADH + H(+). In Medicago sativa (Alfalfa), this protein is Malate dehydrogenase, cytoplasmic (CMDH).